The following is a 361-amino-acid chain: MGEIKRIGILTSGGDCAGLNAVIRSVVHHAIGTYGWEVIGIQEATQGLMENPSKAIALHRDNIDHLLMMGGTFLGTTNKGNPFAFPMADGTVRDRTEDIIAGYRQLGLDALIGIGGDGSLAILRRIAQQGGINLVGIPKTIDNDVGATEISIGFDTATNIATEALDRLHFTAASHNRVMVLEVMGRDAGHIALAAGIGGGADIILIPEIPYRIQSVCNKIRQRQAEGKNFCLVMVSEAVRTELGDQVKQIQQFGEDRYGGIGKYIAEQIAQRTGAETRVTVLGHIQRGGIPSPFDRLLGSVFGVAAVDLIAEGKFDHMVAWRNRQTISVPIEEAIQTYQTVQLDGTLVKTARGLGICLGND.

ATP is bound by residues glycine 14, 79–80 (KG), and 116–119 (GDGS). Aspartate 117 contacts Mg(2+). Substrate is bound by residues 140–142 (TID), arginine 177, 184–186 (MGR), glutamate 237, arginine 278, and 284–287 (HIQR). Aspartate 142 acts as the Proton acceptor in catalysis.

It belongs to the phosphofructokinase type A (PFKA) family. Mixed-substrate PFK group III subfamily. In terms of assembly, homodimer or homotetramer. Mg(2+) serves as cofactor.

Its subcellular location is the cytoplasm. The catalysed reaction is beta-D-fructose 6-phosphate + ATP = beta-D-fructose 1,6-bisphosphate + ADP + H(+). It functions in the pathway carbohydrate degradation; glycolysis; D-glyceraldehyde 3-phosphate and glycerone phosphate from D-glucose: step 3/4. Functionally, catalyzes the phosphorylation of D-fructose 6-phosphate to fructose 1,6-bisphosphate by ATP, the first committing step of glycolysis. This chain is ATP-dependent 6-phosphofructokinase 1, found in Synechocystis sp. (strain ATCC 27184 / PCC 6803 / Kazusa).